Here is a 74-residue protein sequence, read N- to C-terminus: Putative antitoxin VapB48 (74 aa).

Possibly the antitoxin component of a type II toxin-antitoxin (TA) system. Its cognate toxin is VapC48 (Potential). In Mycobacterium tuberculosis (strain CDC 1551 / Oshkosh), this protein is Putative antitoxin VapB48 (vapB48).